A 507-amino-acid chain; its full sequence is Arabinose import ATP-binding protein AraG (507 aa).

2 consecutive ABC transporter domains span residues 14-249 (LRFN…MVGR) and 249-505 (RDIQ…LPRT). 46 to 53 (GENGAGKS) is an ATP binding site.

Belongs to the ABC transporter superfamily. Arabinose importer (TC 3.A.1.2.2) family. In terms of assembly, the complex is composed of two ATP-binding proteins (AraG), two transmembrane proteins (AraH) and a solute-binding protein (AraF).

The protein localises to the cell inner membrane. It catalyses the reaction L-arabinose(out) + ATP + H2O = L-arabinose(in) + ADP + phosphate + H(+). In terms of biological role, part of the ABC transporter complex AraFGH involved in arabinose import. Responsible for energy coupling to the transport system. This Pseudomonas syringae pv. tomato (strain ATCC BAA-871 / DC3000) protein is Arabinose import ATP-binding protein AraG.